Here is a 312-residue protein sequence, read N- to C-terminus: MNAGIIGLGRYIPEKVLTNLDLEKMVETSDEWIRTRTGIEERRIASDDVNTSHMALAAAKKALADADVAAEDIDMILVATVTPDQAFPTVACMIQEQLGAHKACAMDISAACAGFMYGLVTGKQFIESGTFKHVLVVGVEKLSRITDWDDRNTAVLFGDGAGAAVLGEVSEGKGILSFELGADGRGGKHLYLDEKDHTIMNGREVFKFAVRQMGESSVNVIEKAGLSKEDVDFLIPHQANIRIMEAARERLELPVEKMSKTVHKYGNTSAASIPISLCEEIEAGKIHDGDVIVMVGFGGGLTWGAIAMRWGR.

Catalysis depends on residues Cys112 and His237. Residues 238–242 (QANIR) form an ACP-binding region. Asn267 is a catalytic residue.

The protein belongs to the thiolase-like superfamily. FabH family. As to quaternary structure, homodimer.

It is found in the cytoplasm. The catalysed reaction is malonyl-[ACP] + acetyl-CoA + H(+) = 3-oxobutanoyl-[ACP] + CO2 + CoA. Its pathway is lipid metabolism; fatty acid biosynthesis. Catalyzes the condensation reaction of fatty acid synthesis by the addition to an acyl acceptor of two carbons from malonyl-ACP. Catalyzes the first condensation reaction which initiates fatty acid synthesis and may therefore play a role in governing the total rate of fatty acid production. Possesses both acetoacetyl-ACP synthase and acetyl transacylase activities. Its substrate specificity determines the biosynthesis of branched-chain and/or straight-chain of fatty acids. The protein is Beta-ketoacyl-[acyl-carrier-protein] synthase III of Bacillus pumilus (strain SAFR-032).